A 551-amino-acid polypeptide reads, in one-letter code: Tetrachloroethene reductive dehalogenase (551 aa).

Positions 1 to 39 (MGEINRRNFLKVSILGAAAAAVASASAVKGMVSPLVADA) form a signal peptide, tat-type signal. The 4Fe-4S ferredoxin-type 1 domain occupies 411 to 440 (PRKFGVREFCRLCKKCADACPAQAISHEKD). Residues Cys420, Cys423, Cys426, Cys430, Cys467, Cys478, Cys481, and Cys485 each contribute to the [4Fe-4S] cluster site. The region spanning 478–496 (CSNCVAVCSWNKVETWNHD) is the 4Fe-4S ferredoxin-type 2 domain.

This sequence belongs to the PceA family. Requires [4Fe-4S] cluster as cofactor. Corrinoid is required as a cofactor. In terms of processing, predicted to be exported by the Tat system. The position of the signal peptide cleavage has been experimentally proven.

It localises to the cytoplasm. It is found in the cell membrane. The protein resides in the secreted. The catalysed reaction is trichloroethene + chloride + A + H(+) = tetrachloroethene + AH2. It catalyses the reaction trichloroethene + AH2 = (Z)-1,2-dichloroethene + chloride + A + H(+). Its activity is regulated as follows. PceT is required as a chaperone for prePceA maturation. In the absence or presence of exogenous vitamin B12, the intracellular corrinoid level decreases in fumarate-grown cells and the PceA precursor forms catalytically inactive, corrinoid-free multiprotein aggregates. Exogenous vitamin B12 is not incorporated into the PceA precursor, even though it affects the transposition of the pce gene cluster. Catalyzes the reductive dechlorination of tetrachloroethene (PCE) to trichloroethene (TCE) and of trichloroethene to cis-1,2-dichloroethene (DCE). Can also use various chlorinated ethanes such as tetrachloroethane, pentachloroethane and hexachloroethane. Reduced methyl viologen can act as the artificial electron donor. In Desulfitobacterium hafniense (strain Y51), this protein is Tetrachloroethene reductive dehalogenase.